A 628-amino-acid polypeptide reads, in one-letter code: Netrin-4 (628 aa).

The first 18 residues, Met1–Ala18, serve as a signal peptide directing secretion. Positions Cys30 to Ser261 constitute a Laminin N-terminal domain. N-linked (GlcNAc...) asparagine glycans are attached at residues Asn56 and Asn163. 12 disulfides stabilise this stretch: Cys262-Cys271, Cys264-Cys293, Cys295-Cys304, Cys307-Cys329, Cys332-Cys341, Cys334-Cys359, Cys362-Cys371, Cys374-Cys392, Cys395-Cys413, Cys397-Cys420, Cys422-Cys431, and Cys434-Cys446. Laminin EGF-like domains are found at residues Cys262–Thr331, Cys332–Pro394, and Cys395–Pro448. The N-linked (GlcNAc...) asparagine glycan is linked to Asn353. Asn483 is a glycosylation site (N-linked (GlcNAc...) asparagine). 2 disulfides stabilise this stretch: Cys506–Cys576 and Cys520–Cys627. The NTR domain maps to Cys506–Cys627.

As to quaternary structure, may form a homodimer. Expressed in kidney, spleen, mammary gland, aorta, heart, ovary, prostate and fetal spleen.

It localises to the secreted. Its subcellular location is the extracellular space. The protein resides in the extracellular matrix. It is found in the basement membrane. May play an important role in neural, kidney and vascular development. Promotes neurite elongation from olfactory bulb explants. This Homo sapiens (Human) protein is Netrin-4 (NTN4).